A 442-amino-acid chain; its full sequence is C4-dicarboxylate transport protein (442 aa).

A run of 9 helical transmembrane segments spans residues 13-33 (VLYF…HFYP), 49-69 (GIKM…IAGM), 81-101 (LALL…LVVV), 149-169 (AFAK…GFAL), 193-213 (MIAI…AFTI), 227-247 (LMGS…GIIA), 312-332 (IYLT…MTLL), 336-356 (TLLA…GSGF), and 357-377 (IVLA…LAII).

This sequence belongs to the dicarboxylate/amino acid:cation symporter (DAACS) (TC 2.A.23) family.

It localises to the cell membrane. In terms of biological role, responsible for the transport of dicarboxylates such as succinate, fumarate, and malate across the membrane. This Polynucleobacter asymbioticus (strain DSM 18221 / CIP 109841 / QLW-P1DMWA-1) (Polynucleobacter necessarius subsp. asymbioticus) protein is C4-dicarboxylate transport protein.